The primary structure comprises 392 residues: L-serine phosphate decarboxylase (392 aa).

Positions 22–29 (NAGSHSPS) are required for catalytic activity. Asparagine 180 is an O-phospho-L-serine binding site. The residue at position 243 (lysine 243) is an N6-(pyridoxal phosphate)lysine. Residues arginine 354 and arginine 368 each contribute to the O-phospho-L-serine site.

It belongs to the class-II pyridoxal-phosphate-dependent aminotransferase family. Homodimer. Pyridoxal 5'-phosphate serves as cofactor.

It catalyses the reaction O-phospho-L-serine + H(+) = phosphoethanolamine + CO2. It functions in the pathway cofactor biosynthesis. Functionally, pyridoxal phosphate (PLP)-dependent decarboxylase involved in the biosynthesis of norcobamides, cofactors in the tetrachloroethene reductive dehalogenase PceA of S.multivorans. Catalyzes the decarboxylation of L-serine O-phosphate to ethanolamine O-phosphate, the precursor for the linkage between the nucleotide loop and the corrin ring in norcobamide. Less active with L-threonine phosphate. No activity with L-serine or L-threonine. Has no aminotransferase activity as no production of L-glutamate with L-histidinol phosphate and 2-oxoglutarate as substrates. Complements growth defects in the S.enterica cobD deletion mutant, but of the cobamides, the norpseudo-vitamin B12 (norpseudo-B12) rather than the pseudo-B12 is produced in the mutant. However, addition of L-threonine phosphate to the culture minimal medium of the mutant results in formation of also the pseudo-B12, indicating the dual substrate specificity of this enzyme. The polypeptide is L-serine phosphate decarboxylase (Sulfurospirillum multivorans (strain DM 12446 / JCM 15788 / NBRC 109480)).